The chain runs to 242 residues: Large ribosomal subunit protein uL1 (242 aa).

This sequence belongs to the universal ribosomal protein uL1 family. In terms of assembly, part of the 50S ribosomal subunit.

Its function is as follows. Binds directly to 23S rRNA. The L1 stalk is quite mobile in the ribosome, and is involved in E site tRNA release. Functionally, protein L1 is also a translational repressor protein, it controls the translation of the L11 operon by binding to its mRNA. The chain is Large ribosomal subunit protein uL1 from Persephonella marina (strain DSM 14350 / EX-H1).